The sequence spans 118 residues: RNA guanine-N7 methyltransferase activating subunit (118 aa).

N-acetylthreonine is present on threonine 2. The interaction with RNMT stretch occupies residues 2–55; sequence TDTAEAVPNFEEMFASRFTENDKEYQEYLKRPPESPPIVEEWNSRAGGNQRNRG. Residues 30–118 form a disordered region; it reads LKRPPESPPI…YNQRPPYGYY (89 aa). Serine 36 carries the phosphoserine modification. Positions 36–42 match the RNMT-activating domain motif; it reads SPPIVEE. Positions 45–56 are enriched in low complexity; the sequence is SRAGGNQRNRGN. The segment at 56 to 118 is RNA-binding; that stretch reads NRLQDNRQFR…YNQRPPYGYY (63 aa). Basic and acidic residues predominate over residues 57-70; that stretch reads RLQDNRQFRGRDNR. A compositionally biased stretch (polar residues) spans 76–93; the sequence is DNRSNQWHGRSWGNNYPQ. Residue arginine 85 is modified to Omega-N-methylarginine. Serine 86 bears the Phosphoserine mark. Low complexity predominate over residues 98–109; sequence PYYPQQYGHYGY.

It belongs to the RAM family. Interacts with RNMT; this interaction enhances mRNA binding and cap methyltransferase activity.

The protein resides in the nucleus. Regulatory subunit of the mRNA-capping methyltransferase RNMT:RAMAC complex that methylates the N7 position of the added guanosine to the 5'-cap structure of mRNAs. Promotes the recruitment of the methyl donor, S-adenosyl-L-methionine, to RNMT. Regulates RNMT expression by a post-transcriptional stabilizing mechanism. Binds RNA. This is RNA guanine-N7 methyltransferase activating subunit (RAMAC) from Pongo abelii (Sumatran orangutan).